Reading from the N-terminus, the 132-residue chain is Glycine cleavage system H protein (132 aa).

The Lipoyl-binding domain maps to Thr24–His106. The residue at position 65 (Lys65) is an N6-lipoyllysine.

It belongs to the GcvH family. In terms of assembly, the glycine cleavage system is composed of four proteins: P, T, L and H. (R)-lipoate is required as a cofactor.

Functionally, the glycine cleavage system catalyzes the degradation of glycine. The H protein shuttles the methylamine group of glycine from the P protein to the T protein. The sequence is that of Glycine cleavage system H protein from Mycobacterium leprae (strain Br4923).